A 233-amino-acid polypeptide reads, in one-letter code: Translation initiation factor IF-3 (233 aa).

Disordered stretches follow at residues 1 to 21 (MAIQHRDPRGGGGSRDARTNR) and 184 to 233 (LQSQ…AAQR). Positions 193 to 211 (AAAAAAPAAAPAAPAAGAP) are enriched in low complexity. A compositionally biased stretch (pro residues) spans 212–223 (APAPAPAAPAPA). Over residues 224–233 (PAAADPAAQR) the composition is skewed to low complexity.

The protein belongs to the IF-3 family. Monomer.

Its subcellular location is the cytoplasm. Its function is as follows. IF-3 binds to the 30S ribosomal subunit and shifts the equilibrium between 70S ribosomes and their 50S and 30S subunits in favor of the free subunits, thus enhancing the availability of 30S subunits on which protein synthesis initiation begins. This chain is Translation initiation factor IF-3, found in Anaeromyxobacter dehalogenans (strain 2CP-C).